The chain runs to 368 residues: Probable dual-specificity RNA methyltransferase RlmN (368 aa).

Catalysis depends on E100, which acts as the Proton acceptor. In terms of domain architecture, Radical SAM core spans Q106–D344. An intrachain disulfide couples C113 to C349. The [4Fe-4S] cluster site is built by C120, C124, and C127. S-adenosyl-L-methionine contacts are provided by residues G172–E173, S204, S227–H229, and N305. The S-methylcysteine intermediate role is filled by C349.

It belongs to the radical SAM superfamily. RlmN family. [4Fe-4S] cluster is required as a cofactor.

The protein localises to the cytoplasm. It carries out the reaction adenosine(2503) in 23S rRNA + 2 reduced [2Fe-2S]-[ferredoxin] + 2 S-adenosyl-L-methionine = 2-methyladenosine(2503) in 23S rRNA + 5'-deoxyadenosine + L-methionine + 2 oxidized [2Fe-2S]-[ferredoxin] + S-adenosyl-L-homocysteine. It catalyses the reaction adenosine(37) in tRNA + 2 reduced [2Fe-2S]-[ferredoxin] + 2 S-adenosyl-L-methionine = 2-methyladenosine(37) in tRNA + 5'-deoxyadenosine + L-methionine + 2 oxidized [2Fe-2S]-[ferredoxin] + S-adenosyl-L-homocysteine. Its function is as follows. Specifically methylates position 2 of adenine 2503 in 23S rRNA and position 2 of adenine 37 in tRNAs. The protein is Probable dual-specificity RNA methyltransferase RlmN of Streptococcus agalactiae serotype III (strain NEM316).